A 297-amino-acid chain; its full sequence is Syntaxin-4 (297 aa).

Positions 1–12 (MRDRTHELRQGD) are enriched in basic and acidic residues. The disordered stretch occupies residues 1-21 (MRDRTHELRQGDDSSDDEDKE). Topologically, residues 1 to 275 (MRDRTHELRQ…QKKARKKKVF (275 aa)) are cytoplasmic. Residues S14 and S15 each carry the phosphoserine modification. T31 carries the post-translational modification Phosphothreonine. Phosphoserine occurs at positions 36, 117, 208, and 248. The stretch at 43 to 163 (QKVRTIRQTI…ERIRRQLKIT (121 aa)) forms a coiled coil. The t-SNARE coiled-coil homology domain maps to 200–262 (LNEISARHSE…ERGQEHVKVA (63 aa)). The helical; Anchor for type IV membrane protein transmembrane segment at 276–296 (IAICLSITVLILVVIIVISTL) threads the bilayer. A topological domain (extracellular) is located at residue V297.

It belongs to the syntaxin family. As to quaternary structure, component of the SNARE complex composed of STX4, SNAP23 and VAMP7 that interacts with SYT7 during lysosomal exocytosis. Found in a complex with VAMP8 and SNAP23. Detected in a complex with SNAP23 and STXBP4. Interacts with VAMP2. Interacts with SNAP23 and SNAPIN. Interacts with LLGL1. Interacts (via C-terminus) with CENPF. Interacts with DOC2B. Interacts with STXBP6. Interacts with STXBP3; excludes interaction with DOC2B and SNAP25. Interacts with STXBP4; excludes interaction with VAMP2. Interacts with STXBP5L.

It localises to the cell membrane. It is found in the cell projection. Its subcellular location is the neuron projection. The protein resides in the stereocilium. In terms of biological role, plasma membrane t-SNARE that mediates docking of transport vesicles. Necessary for the translocation of SLC2A4 from intracellular vesicles to the plasma membrane. In neurons, recruited at neurite tips to membrane domains rich in the phospholipid 1-oleoyl-2-palmitoyl-PC (OPPC) which promotes neurite tip surface expression of the dopamine transporter SLC6A3/DAT by facilitating fusion of SLC6A3-containing transport vesicles with the plasma membrane. Together with STXB3 and VAMP2, may also play a role in docking/fusion of intracellular GLUT4-containing vesicles with the cell surface in adipocytes and in docking of synaptic vesicles at presynaptic active zones. Required for normal hearing. The polypeptide is Syntaxin-4 (STX4) (Bos taurus (Bovine)).